The sequence spans 218 residues: Redox-sensing transcriptional repressor Rex (218 aa).

The segment at residues 18 to 57 (LYYRFIQSLHASGKQRVSSAELSEAVKVDSATIRRDFSYF) is a DNA-binding region (H-T-H motif). 92-97 (GVGHLG) contributes to the NAD(+) binding site.

The protein belongs to the transcriptional regulatory Rex family. As to quaternary structure, homodimer.

It localises to the cytoplasm. Modulates transcription in response to changes in cellular NADH/NAD(+) redox state. The polypeptide is Redox-sensing transcriptional repressor Rex (Exiguobacterium sp. (strain ATCC BAA-1283 / AT1b)).